The sequence spans 431 residues: Enolase (431 aa).

Q167 is a binding site for (2R)-2-phosphoglycerate. E209 (proton donor) is an active-site residue. Residues D246, E290, and D316 each contribute to the Mg(2+) site. The (2R)-2-phosphoglycerate site is built by K341, R370, S371, and K392. The active-site Proton acceptor is the K341.

The protein belongs to the enolase family. Component of the RNA degradosome, a multiprotein complex involved in RNA processing and mRNA degradation. The cofactor is Mg(2+).

Its subcellular location is the cytoplasm. The protein resides in the secreted. It is found in the cell surface. The enzyme catalyses (2R)-2-phosphoglycerate = phosphoenolpyruvate + H2O. Its pathway is carbohydrate degradation; glycolysis; pyruvate from D-glyceraldehyde 3-phosphate: step 4/5. Its function is as follows. Catalyzes the reversible conversion of 2-phosphoglycerate (2-PG) into phosphoenolpyruvate (PEP). It is essential for the degradation of carbohydrates via glycolysis. The polypeptide is Enolase (Shigella flexneri serotype 5b (strain 8401)).